A 473-amino-acid polypeptide reads, in one-letter code: Ribulose bisphosphate carboxylase large chain (473 aa).

A propeptide spanning residues M1–S2 is cleaved from the precursor. Position 3 is an N-acetylproline (P3). K14 is modified (N6,N6,N6-trimethyllysine). Substrate contacts are provided by N123 and T173. Residue K175 is the Proton acceptor of the active site. Residue K177 participates in substrate binding. Residues K201, D203, and E204 each contribute to the Mg(2+) site. K201 bears the N6-carboxylysine mark. The active-site Proton acceptor is the H294. Residues R295, H327, and S379 each coordinate substrate.

Belongs to the RuBisCO large chain family. Type I subfamily. As to quaternary structure, heterohexadecamer of 8 large chains and 8 small chains; disulfide-linked. The disulfide link is formed within the large subunit homodimers. It depends on Mg(2+) as a cofactor. In terms of processing, the disulfide bond which can form in the large chain dimeric partners within the hexadecamer appears to be associated with oxidative stress and protein turnover.

Its subcellular location is the plastid. The protein resides in the chloroplast. It carries out the reaction 2 (2R)-3-phosphoglycerate + 2 H(+) = D-ribulose 1,5-bisphosphate + CO2 + H2O. The catalysed reaction is D-ribulose 1,5-bisphosphate + O2 = 2-phosphoglycolate + (2R)-3-phosphoglycerate + 2 H(+). In terms of biological role, ruBisCO catalyzes two reactions: the carboxylation of D-ribulose 1,5-bisphosphate, the primary event in carbon dioxide fixation, as well as the oxidative fragmentation of the pentose substrate in the photorespiration process. Both reactions occur simultaneously and in competition at the same active site. This is Ribulose bisphosphate carboxylase large chain from Cajanus cajan (Pigeon pea).